The chain runs to 388 residues: LL-diaminopimelate aminotransferase (388 aa).

The substrate site is built by Tyr-15 and Gly-40. Pyridoxal 5'-phosphate contacts are provided by residues Tyr-69, 103-104 (SK), Tyr-128, Asn-178, Tyr-209, and 237-239 (SLS). Residues Lys-104, Tyr-128, and Asn-178 each contribute to the substrate site. Lys-240 carries the post-translational modification N6-(pyridoxal phosphate)lysine. Arg-248 is a pyridoxal 5'-phosphate binding site. Arg-366 contacts substrate.

This sequence belongs to the class-I pyridoxal-phosphate-dependent aminotransferase family. LL-diaminopimelate aminotransferase subfamily. Homodimer. The cofactor is pyridoxal 5'-phosphate.

It carries out the reaction (2S,6S)-2,6-diaminopimelate + 2-oxoglutarate = (S)-2,3,4,5-tetrahydrodipicolinate + L-glutamate + H2O + H(+). It functions in the pathway amino-acid biosynthesis; L-lysine biosynthesis via DAP pathway; LL-2,6-diaminopimelate from (S)-tetrahydrodipicolinate (aminotransferase route): step 1/1. Functionally, involved in the synthesis of meso-diaminopimelate (m-DAP or DL-DAP), required for both lysine and peptidoglycan biosynthesis. Catalyzes the direct conversion of tetrahydrodipicolinate to LL-diaminopimelate. Can also use m-DAP instead of LL-DAP as the amino-group donor. The sequence is that of LL-diaminopimelate aminotransferase from Syntrophobacter fumaroxidans (strain DSM 10017 / MPOB).